A 30-amino-acid polypeptide reads, in one-letter code: DDCGKLFSGCDTNADCCEGYVCRLWCKLDW.

Intrachain disulfides connect cysteine 3-cysteine 17, cysteine 10-cysteine 22, and cysteine 16-cysteine 26. Position 30 is a tryptophan amide (tryptophan 30).

This sequence belongs to the neurotoxin 10 (Hwtx-1) family. 19 (HpTX2) subfamily. Expressed by the venom gland.

It localises to the secreted. Functionally, inhibitor of voltage-gated potassium channels of the Kv4/KCND family. Inhibition of Kv4.3/KCND3 and Kv4.2/KCND2 is strongly voltage-dependent, while inhibition of Kv4.1/KCND1 shows less voltage-dependence. Its binding site may be near the potassium channel voltage sensor. Also blocks calcium channels. In Heteropoda venatoria (Brown huntsman spider), this protein is Kappa-sparatoxin-Hv1b.